Consider the following 612-residue polypeptide: Glucoamylase (612 aa).

Residues 1–19 form the signal peptide; sequence MVSFSSCLRALALGSSVLA. The propeptide occupies 20–25; it reads VQPVLR. A glycan (N-linked (GlcNAc...) asparagine) is linked at N39. Residue W146 coordinates substrate. D202 serves as the catalytic Proton acceptor. The active-site Proton donor is E205. 3 disulfide bridges follow: C236–C239, C248–C475, and C288–C296. Residues 506–612 form the CBM20 domain; the sequence is CQVPTTVSVT…KSAVQSDVWR (107 aa).

The protein belongs to the glycosyl hydrolase 15 family.

The enzyme catalyses Hydrolysis of terminal (1-&gt;4)-linked alpha-D-glucose residues successively from non-reducing ends of the chains with release of beta-D-glucose.. The chain is Glucoamylase (glaA) from Aspergillus oryzae (strain ATCC 42149 / RIB 40) (Yellow koji mold).